A 750-amino-acid chain; its full sequence is MTIRSPEPEVKIVVERDPIKTSFEKWAQPGHFSRTLAKGPNTTTWIWNLHADAHDFDSHTNDLEDISRKVFSAHFGQLAIILIWLSGMYFHGARFSNYEAWLSDPTHIKPSAQVVWPIVGQEILNGDVGGGFQGIQITSGFFQLWRASGITNELQLYCTAIGALIFAGLMLFAGWFHYHKAAPKLARFQDVESMLNHHLAGLLGLGSLGWAGHQVHVSLPINQLLDAGVDPKEIPLPHEFILNRDLLAQLYPSFAKGLTPFFTSNWSEYADFLTFRGGLNPVTGGLWLTDTAHHHLAIGVLFLVAGHMYRTNWGIGHSIKEILEAHKGPFTGEGHKGLYEILTTSWHAQLALNLAMLGSLTIIVAHHMYSMPPYPYLATDYGTQLSLFTHHMWIGGFLVVGAAAHAAIFMVRDYDPTTQYNNLLDRVLRHRDAIISHLNWVCIFLGFHSFGLYIHNDTMSALGRPQDMFSDTAIQLQPIFAQWIQNTHAFAPSLTAPNATASTSLTWGGGDLIAVGGKVALLPIPLGTADFLVHHIHAFTIHVTVLILLKGVLFARSSRLIPDKANLGFRFPCDGPGRGGTCQVSAWDHVFLGLFWMYNSISIVIFHFSWKMQSDVWGSISDQGVVSHITGGNFAQSATTINGWLRDFLWAQASQVIQSYGSSLSAYGLLFLGAHFVWAFSLMFLFSGRGYWQELIESIVWAHNKLKVAPAIQPRALSIVQGRAVGVAHYLLGGIATTWAFFLARIISVG.

8 helical membrane passes run 70–93 (VFSA…FHGA), 156–179 (LYCT…FHYH), 195–219 (LNHH…HVSL), 291–309 (TAHH…GHMY), 346–369 (WHAQ…HHMY), 385–411 (LSLF…IFMV), 433–455 (AIIS…LYIH), and 531–549 (FLVH…LILL). Residues Cys-573 and Cys-582 each coordinate [4Fe-4S] cluster. A run of 2 helical transmembrane segments spans residues 589-610 (HVFL…HFSW) and 664-686 (LSAY…MFLF). Residue His-675 participates in chlorophyll a' binding. Met-683 and Tyr-691 together coordinate chlorophyll a. Trp-692 lines the phylloquinone pocket. The chain crosses the membrane as a helical span at residues 724-744 (AVGVAHYLLGGIATTWAFFLA).

This sequence belongs to the PsaA/PsaB family. As to quaternary structure, the PsaA/B heterodimer binds the P700 chlorophyll special pair and subsequent electron acceptors. PSI consists of a core antenna complex that captures photons, and an electron transfer chain that converts photonic excitation into a charge separation. The eukaryotic PSI reaction center is composed of at least 11 subunits. Requires P700 is a chlorophyll a/chlorophyll a' dimer, A0 is one or more chlorophyll a, A1 is one or both phylloquinones and FX is a shared 4Fe-4S iron-sulfur center. as cofactor.

Its subcellular location is the plastid. It localises to the chloroplast thylakoid membrane. It carries out the reaction reduced [plastocyanin] + hnu + oxidized [2Fe-2S]-[ferredoxin] = oxidized [plastocyanin] + reduced [2Fe-2S]-[ferredoxin]. In terms of biological role, psaA and PsaB bind P700, the primary electron donor of photosystem I (PSI), as well as the electron acceptors A0, A1 and FX. PSI is a plastocyanin-ferredoxin oxidoreductase, converting photonic excitation into a charge separation, which transfers an electron from the donor P700 chlorophyll pair to the spectroscopically characterized acceptors A0, A1, FX, FA and FB in turn. Oxidized P700 is reduced on the lumenal side of the thylakoid membrane by plastocyanin. This is Photosystem I P700 chlorophyll a apoprotein A1 from Angiopteris evecta (Mule's foot fern).